We begin with the raw amino-acid sequence, 128 residues long: Flagellar basal body rod protein FlgB (128 aa).

Belongs to the flagella basal body rod proteins family. The basal body constitutes a major portion of the flagellar organelle and consists of a number of rings mounted on a central rod. In Gram-negative bacteria, at least four rings, L, P, S and M are present, whereas Gram-positive bacteria lack the L and P rings. The rod consists of about 26 subunits of FlgG in the distal portion, and FlgB, FlgC and FlgF build up the proximal portion of the rod with about 6 subunits each. Rod assembly occurs by export via the flagellum-specific pathway of its constituent proteins and by their incorporation into the rod structure in the probable order of FlgB, FlgC, FlgF and FlgG. Another protein, FliE, also assembles onto the stable rod structure.

Its subcellular location is the bacterial flagellum basal body. In terms of biological role, structural component of flagellum, the bacterial motility apparatus. Part of the rod structure of flagellar basal body. The sequence is that of Flagellar basal body rod protein FlgB from Cereibacter sphaeroides (strain ATCC 17029 / ATH 2.4.9) (Rhodobacter sphaeroides).